Here is a 142-residue protein sequence, read N- to C-terminus: MAGIGPITQDWEPVVIRKKPANAAAKRDEKTVNAARRSGADIETVRKFNAGTNKAASSGTSLNTKMLDDDTENLTHERVPTELKKAIMQARTDKKLTQSQLAQIINEKPQVIQEYESGKAIPNQQILSKLERALGAKLRGKK.

Positions 51–64 (GTNKAASSGTSLNT) are enriched in polar residues. The tract at residues 51–77 (GTNKAASSGTSLNTKMLDDDTENLTHE) is disordered. An HTH cro/C1-type domain is found at 87 to 141 (IMQARTDKKLTQSQLAQIINEKPQVIQEYESGKAIPNQQILSKLERALGAKLRGK). The H-T-H motif DNA-binding region spans 98 to 117 (QSQLAQIINEKPQVIQEYES).

This sequence belongs to the MBF1 family. In terms of tissue distribution, expressed in leaves, roots, stems, flowers, siliques and shoots. Detected only in anthers and some seeds in siliques.

It is found in the nucleus. The protein resides in the nucleolus. In terms of biological role, transcriptional coactivator that stimulates transcriptional activity by bridging regulatory proteins and TBP, thereby recruiting TBP to promoters occupied by DNA-binding regulators. This chain is Multiprotein-bridging factor 1a (MBF1A), found in Arabidopsis thaliana (Mouse-ear cress).